The sequence spans 104 residues: Large ribosomal subunit protein bL21 (104 aa).

Belongs to the bacterial ribosomal protein bL21 family. Part of the 50S ribosomal subunit. Contacts protein L20.

Functionally, this protein binds to 23S rRNA in the presence of protein L20. The sequence is that of Large ribosomal subunit protein bL21 from Granulibacter bethesdensis (strain ATCC BAA-1260 / CGDNIH1).